The following is a 23-amino-acid chain: Basic phospholipase A2 CB1 (23 aa).

As to quaternary structure, heterodimer of an acidic subunit and a basic chain. The acidic subunit is non-toxic, without enzymatic activity and comprises 3 peptides that are cross-linked by 7 disulfide bridges. The basic subunit is toxic, has phospholipase A2 activity and is composed of a single chain. The cofactor is Ca(2+). Post-translationally, contains 7 disulfide bonds. Expressed by the venom gland.

The protein localises to the secreted. It carries out the reaction a 1,2-diacyl-sn-glycero-3-phosphocholine + H2O = a 1-acyl-sn-glycero-3-phosphocholine + a fatty acid + H(+). Its function is as follows. Snake venom phospholipase A2 (PLA2) that shows presynaptic neurotoxicity. PLA2 catalyzes the calcium-dependent hydrolysis of the 2-acyl groups in 3-sn-phosphoglycerides. The polypeptide is Basic phospholipase A2 CB1 (Crotalus basiliscus (Mexican west-coast rattlesnake)).